Reading from the N-terminus, the 31-residue chain is Dermaseptin-7.1TR (31 aa).

Residue Q31 is modified to Glutamine amide.

In terms of tissue distribution, expressed by the skin glands.

It is found in the secreted. Functionally, has antimicrobial activity. The polypeptide is Dermaseptin-7.1TR (Phyllomedusa trinitatis (Trinidad leaf frog)).